We begin with the raw amino-acid sequence, 396 residues long: Elongation factor Tu (396 aa).

Residues 10-206 (KPHVNIGTIG…AVDAYIPEPE (197 aa)) enclose the tr-type G domain. Residues 19–26 (GHVDHGKT) are G1. Position 19 to 26 (19 to 26 (GHVDHGKT)) interacts with GTP. Position 26 (Thr-26) interacts with Mg(2+). The interval 60 to 64 (GITIS) is G2. Positions 81-84 (DCPG) are G3. GTP contacts are provided by residues 81–85 (DCPGH) and 136–139 (NKVD). Residues 136-139 (NKVD) form a G4 region. The segment at 174-176 (SAL) is G5.

It belongs to the TRAFAC class translation factor GTPase superfamily. Classic translation factor GTPase family. EF-Tu/EF-1A subfamily. In terms of assembly, monomer.

The protein localises to the cytoplasm. The enzyme catalyses GTP + H2O = GDP + phosphate + H(+). Its function is as follows. GTP hydrolase that promotes the GTP-dependent binding of aminoacyl-tRNA to the A-site of ribosomes during protein biosynthesis. This is Elongation factor Tu from Magnetococcus marinus (strain ATCC BAA-1437 / JCM 17883 / MC-1).